Consider the following 145-residue polypeptide: MLMPKRVKHRKQFRGSMAGKATRGNKITNGEYGIVALEPCWIKANQIEAARVAMTRYIKRGGKVWIKIFPEKPVTHKPMGVRMGKGKGALEYWVAVVKPGRVLFEISGVPEDVAKEALRLATHKLPCKCKVVSRADLEGGESNEN.

The protein belongs to the universal ribosomal protein uL16 family. Part of the 50S ribosomal subunit.

Its function is as follows. Binds 23S rRNA and is also seen to make contacts with the A and possibly P site tRNAs. This is Large ribosomal subunit protein uL16 from Agathobacter rectalis (strain ATCC 33656 / DSM 3377 / JCM 17463 / KCTC 5835 / VPI 0990) (Eubacterium rectale).